The sequence spans 388 residues: UPF0496 protein 1 (388 aa).

The interval 1–25 is disordered; sequence MGNSSSSGSHRPPRPASSESALPPA. Positions 198–227 form a coiled coil; the sequence is QAVYRQQLTMLEKLQQRKHRLDKKVRAIKA. A run of 2 helical transmembrane segments spans residues 234–254 and 257–277; these read IIFA…AAIA and PVAA…GKWI. A coiled-coil region spans residues 344–376; that stretch reads VEEIKKKLEVFMKSVEDLGEQADRCSRDIRRAR.

This sequence belongs to the UPF0496 family.

It is found in the membrane. In Oryza sativa subsp. japonica (Rice), this protein is UPF0496 protein 1.